Reading from the N-terminus, the 785-residue chain is SUN domain-containing protein 1 (785 aa).

The interval 1–138 (MDFSRLHMYS…TRRPPVLDES (138 aa)) is LMNA-binding. Residues 1 to 288 (MDFSRLHMYS…VFLLTRCLRN (288 aa)) are Nuclear-facing. A phosphoserine mark is found at Ser-48, Ser-100, and Ser-138. A Glycyl lysine isopeptide (Lys-Gly) (interchain with G-Cter in SUMO2) cross-link involves residue Lys-195. The segment at 209–309 (SRVYSRDRNQ…FLLLAGLSLR (101 aa)) is SYNE2-binding. The tract at residues 223 to 309 (LLQILRRIGA…FLLLAGLSLR (87 aa)) is EMD-binding. Residues 289–308 (ICKFLVLLIPLFLLLAGLSL) traverse the membrane as a helical segment. Over 309-785 (RGQGNFFSFL…RFRVHGEPVK (477 aa)) the chain is Perinuclear space. Phosphoserine occurs at positions 333 and 344. Residues 428–495 (HQEHEVRMSH…KSELSSWRHV (68 aa)) adopt a coiled-coil conformation. Residues 574–785 (TSEAVVSAVS…RFRVHGEPVK (212 aa)) form a sufficient for interaction with SYNE1 and SYNE2 region. Residues 622 to 784 (GGSILSTRCS…YRFRVHGEPV (163 aa)) enclose the SUN domain.

Core component of the LINC complex which is composed of inner nuclear membrane SUN domain-containing proteins coupled to outer nuclear membrane KASH domain-containing nesprins. SUN and KASH domain-containing proteins seem to bind each other promiscuously; however, differentially expression of LINC complex constituents is giving rise to specific assemblies. At least SUN1/2-containing core LINC complexes are proposed to be hexameric composed of three protomers of each KASH and SUN domain-containing protein. Interacts with KASH5 (via the last 22 amino acids); this interaction mediates KASH5 telomere localization by forming a SUN1:KASH5 LINC complex. May interact with SYNE3. Interacts with SYNE2 and SYNE1; probably forming respective LINC complexes. Interacts with A-type lamin with a strong preference for unprocessed A-type lamin compared with the mature protein. Interaction with lamins B1 and C is hardly detectable. Interacts with NAT10. Interacts with EMD and TSNAX. Associates with the nuclear pore complex (NPC). Interacts with CCDC79/TERB1; promoting the accumulation of the LINC complex complexes at the telomere-nuclear envelope attachment sites. Interacts (via KASH domain) with TMEM258. The disulfide bond with KASH domain-containing nesprins is required for stability of the respective LINC complexes under tensile forces.

Its subcellular location is the nucleus inner membrane. As a component of the LINC (LInker of Nucleoskeleton and Cytoskeleton) complex involved in the connection between the nuclear lamina and the cytoskeleton. The nucleocytoplasmic interactions established by the LINC complex play an important role in the transmission of mechanical forces across the nuclear envelope and in nuclear movement and positioning. Required for interkinetic nuclear migration (INM) and essential for nucleokinesis and centrosome-nucleus coupling during radial neuronal migration in the cerebral cortex and during glial migration. Involved in telomere attachment to nuclear envelope in the prophase of meiosis implicating a SUN1/2:KASH5 LINC complex in which SUN1 and SUN2 seem to act at least partial redundantly. Required for gametogenesis and involved in selective gene expression of coding and non-coding RNAs needed for gametogenesis. Helps to define the distribution of nuclear pore complexes (NPCs). Required for efficient localization of SYNE4 in the nuclear envelope. May be involved in nuclear remodeling during sperm head formation in spermatogenesis. May play a role in DNA repair by suppressing non-homologous end joining repair to facilitate the repair of DNA cross-links. This chain is SUN domain-containing protein 1, found in Homo sapiens (Human).